Reading from the N-terminus, the 572-residue chain is MRTSQYLLSTLKETPADAEVISHQLMLRAGMIRKLASGLYTWLPTGLRVLKKVENIVREEMNNAGAIEVSMPVVQPADLWQESGRWEQYGPELLRFVDRGERPFVLGPTHEEVITDLVRNELSSYKQLPLNFFQIQTKFRDEVRPRFGVMRSREFLMKDAYSFHTSQESLQETYDAMYAAYSRIFSRMGLDFRAVQADTGSIGGNASHEFQVLAQSGEDDIVFSDVSDYAANIELAEAIAPQTPRAAATQEMTLVDTPNAKTIAELVEQFNLPIEKTVKTLLVKAAKDSKSPLVALLVRGDHELNEVKAEKLPHVASPLTFATEEEIRAVINAGPGSLGPVNMSIPVIIDRTVAAMSDFAAGANIDGKHYFGINWDRDVATPVVADIRNVVAGDPSPDGQGTLLIKRGIEVGHIFQLGTKYSEALKASVQGEDGRNQILTMGCYGIGVTRVVAAAIEQNFDERGIVWPDAIAPFQVAILPMNMHKSFRVQELAEKLYSELRAQGIEVLMDDRKERPGVMFADMELIGIPHTIVIGDRNLDNDDIEYKYRRSGEKSLIKTGDIVDYLVKAIKG.

The protein belongs to the class-II aminoacyl-tRNA synthetase family. ProS type 1 subfamily. Homodimer.

Its subcellular location is the cytoplasm. The catalysed reaction is tRNA(Pro) + L-proline + ATP = L-prolyl-tRNA(Pro) + AMP + diphosphate. In terms of biological role, catalyzes the attachment of proline to tRNA(Pro) in a two-step reaction: proline is first activated by ATP to form Pro-AMP and then transferred to the acceptor end of tRNA(Pro). As ProRS can inadvertently accommodate and process non-cognate amino acids such as alanine and cysteine, to avoid such errors it has two additional distinct editing activities against alanine. One activity is designated as 'pretransfer' editing and involves the tRNA(Pro)-independent hydrolysis of activated Ala-AMP. The other activity is designated 'posttransfer' editing and involves deacylation of mischarged Ala-tRNA(Pro). The misacylated Cys-tRNA(Pro) is not edited by ProRS. This is Proline--tRNA ligase from Salmonella schwarzengrund (strain CVM19633).